Consider the following 1789-residue polypeptide: Protein sprint (1789 aa).

Disordered stretches follow at residues threonine 53–proline 120, threonine 140–asparagine 190, proline 218–glycine 237, glutamine 261–leucine 317, leucine 329–aspartate 378, and arginine 401–leucine 460. Residues serine 82–asparagine 114 are compositionally biased toward low complexity. The segment covering threonine 140–glutamine 149 has biased composition (polar residues). A compositionally biased stretch (acidic residues) spans proline 176–alanine 185. The segment covering arginine 223–cysteine 233 has biased composition (polar residues). Low complexity predominate over residues asparagine 295–leucine 317. Positions glutamine 337 to asparagine 361 are enriched in polar residues. The span at glutamine 409–serine 418 shows a compositional bias: low complexity. Residues threonine 428–glutamate 445 show a composition bias toward acidic residues. The SH2 domain maps to tryptophan 473–arginine 566. 7 disordered regions span residues phenylalanine 632 to glutamine 689, threonine 744 to glycine 787, glycine 852 to serine 918, aspartate 969 to leucine 1006, alanine 1040 to proline 1067, arginine 1094 to proline 1123, and proline 1138 to arginine 1160. Pro residues predominate over residues lysine 639–proline 649. Low complexity predominate over residues threonine 671–serine 686. Positions threonine 857–serine 868 are enriched in polar residues. Over residues alanine 903–aspartate 914 the composition is skewed to basic and acidic residues. Over residues threonine 974–serine 984 the composition is skewed to low complexity. 2 stretches are compositionally biased toward polar residues: residues threonine 994 to leucine 1006 and threonine 1048 to glycine 1065. A compositionally biased stretch (low complexity) spans serine 1143–glutamine 1154. Residues arginine 1531–glutamate 1673 enclose the VPS9 domain. Residues cysteine 1689–alanine 1777 enclose the Ras-associating domain.

This sequence belongs to the RIN (Ras interaction/interference) family. In terms of tissue distribution, in late cellular blastoderm embryos, it is expressed in the posterior end. Then, as development proceeds, it is expressed in the developing midgut, amnioserosa and in a specific subset of CNS neurons. Isoform 1 is expressed earlier in developing midgut and amnioserosa, but is not expressed in the CNS.

Its function is as follows. Potential Ras effector protein. May function as a guanine nucleotide exchange (GEF), by exchanging bound GDP for free GTP. This Drosophila melanogaster (Fruit fly) protein is Protein sprint (spri).